We begin with the raw amino-acid sequence, 274 residues long: Probable WRKY transcription factor 49 (274 aa).

The segment at residues 108–173 is a DNA-binding region (WRKY); sequence NSNGMCDDGY…YEGFHFHYTY (66 aa). The disordered stretch occupies residues 188 to 228; sequence KTKIHKHNAQDMNKKSQTQEESKEAQLGELTNQNHPVNKAQ. Residues 193–222 are a coiled coil; sequence KHNAQDMNKKSQTQEESKEAQLGELTNQNH. The segment covering 195–213 has biased composition (basic and acidic residues); the sequence is NAQDMNKKSQTQEESKEAQ. Polar residues predominate over residues 216–228; it reads ELTNQNHPVNKAQ.

Belongs to the WRKY group II-c family.

Its subcellular location is the nucleus. Its function is as follows. Transcription factor. Interacts specifically with the W box (5'-(T)TGAC[CT]-3'), a frequently occurring elicitor-responsive cis-acting element. The chain is Probable WRKY transcription factor 49 (WRKY49) from Arabidopsis thaliana (Mouse-ear cress).